The sequence spans 345 residues: Myb/SANT-like DNA-binding domain-containing protein 4 (345 aa).

The region spanning 4–77 (LKRKRKSNFS…EVKRRYLDWR (74 aa)) is the Myb-like domain. A Glycyl lysine isopeptide (Lys-Gly) (interchain with G-Cter in SUMO2) cross-link involves residue K9. S106 bears the Phosphoserine mark. Glycyl lysine isopeptide (Lys-Gly) (interchain with G-Cter in SUMO2) cross-links involve residues K114 and K142. The interval 143–175 (VEEEERDPQSPEFEIEEEEEMLSSVIPDSRREN) is disordered. At T188 the chain carries Phosphothreonine. A coiled-coil region spans residues 203–345 (LLVNIEKQKL…LRIQKEGHLQ (143 aa)). Glycyl lysine isopeptide (Lys-Gly) (interchain with G-Cter in SUMO2) cross-links involve residues K237, K254, and K273.

This chain is Myb/SANT-like DNA-binding domain-containing protein 4 (MSANTD4), found in Homo sapiens (Human).